The sequence spans 170 residues: Orotate phosphoribosyltransferase (170 aa).

Residues Arg-86, Lys-87, Lys-90, His-92, and 111 to 119 contribute to the 5-phospho-alpha-D-ribose 1-diphosphate site; that span reads EDVTTSGGS. Orotate-binding residues include Thr-115 and Arg-143.

Belongs to the purine/pyrimidine phosphoribosyltransferase family. PyrE subfamily. Homodimer. Mg(2+) is required as a cofactor.

The enzyme catalyses orotidine 5'-phosphate + diphosphate = orotate + 5-phospho-alpha-D-ribose 1-diphosphate. It functions in the pathway pyrimidine metabolism; UMP biosynthesis via de novo pathway; UMP from orotate: step 1/2. Catalyzes the transfer of a ribosyl phosphate group from 5-phosphoribose 1-diphosphate to orotate, leading to the formation of orotidine monophosphate (OMP). This chain is Orotate phosphoribosyltransferase, found in Methanoculleus marisnigri (strain ATCC 35101 / DSM 1498 / JR1).